A 102-amino-acid polypeptide reads, in one-letter code: Citrate lyase acyl carrier protein (102 aa).

O-(phosphoribosyl dephospho-coenzyme A)serine is present on Ser14.

The protein belongs to the CitD family. In terms of assembly, oligomer with a subunit composition of (alpha,beta,gamma)6.

The protein localises to the cytoplasm. Its function is as follows. Covalent carrier of the coenzyme of citrate lyase. The sequence is that of Citrate lyase acyl carrier protein from Streptococcus equi subsp. zooepidemicus (strain MGCS10565).